A 369-amino-acid chain; its full sequence is MRFSFFSGIRDLFRHLIISATSGALSDRLGWLWAVIARVFSGSVWLRHKIAKSPHQVQATVVSVGNIVVGGTGKTPLVLWLAQALHERGLSCAVLSRGYKGKYSKKKAFTIVNPALHTASCVGDEPLLLAKYLPSGTVRIQKDRKTLAEKSAGDFDVLLLDDGFQYNRLHKDVEIVLVNGSDPFGGGSFFPKGRLRDFPERLAKADYVMINGRCSPSDQRELDRLHPEEKIVIEPQISEIVWLNQSVNMPRDHWEGLGVGVFCGLGFPKGFLAMLRDAGIHVLGTYLLPDHVGITKQELELFCKKIILRQGVGILCTEKDSVKIGALAEEISFPVGEVRMRFSCVCNERRMVAMLDAIEAIQKNKRVTT.

68–75 (VVGGTGKT) is a binding site for ATP.

This sequence belongs to the LpxK family.

It carries out the reaction a lipid A disaccharide + ATP = a lipid IVA + ADP + H(+). It functions in the pathway glycolipid biosynthesis; lipid IV(A) biosynthesis; lipid IV(A) from (3R)-3-hydroxytetradecanoyl-[acyl-carrier-protein] and UDP-N-acetyl-alpha-D-glucosamine: step 6/6. Transfers the gamma-phosphate of ATP to the 4'-position of a tetraacyldisaccharide 1-phosphate intermediate (termed DS-1-P) to form tetraacyldisaccharide 1,4'-bis-phosphate (lipid IVA). The protein is Tetraacyldisaccharide 4'-kinase of Chlamydia trachomatis serovar D (strain ATCC VR-885 / DSM 19411 / UW-3/Cx).